A 122-amino-acid polypeptide reads, in one-letter code: Succinate dehydrogenase assembly factor 2, mitochondrial (122 aa).

Belongs to the SDHAF2 family. Interacts with the flavoprotein subunit within the SDH catalytic dimer.

The protein resides in the mitochondrion matrix. Its function is as follows. Plays an essential role in the assembly of succinate dehydrogenase (SDH), an enzyme complex (also referred to as respiratory complex II) that is a component of both the tricarboxylic acid (TCA) cycle and the mitochondrial electron transport chain, and which couples the oxidation of succinate to fumarate with the reduction of ubiquinone (coenzyme Q) to ubiquinol. Required for flavinylation (covalent attachment of FAD) of the flavoprotein subunit of the SDH catalytic dimer. In Caenorhabditis briggsae, this protein is Succinate dehydrogenase assembly factor 2, mitochondrial.